A 184-amino-acid chain; its full sequence is Structural protein V8 (184 aa).

Residues 14–35 (IYNKSNTLTNTPSNPTGNTNTL) are disordered.

It belongs to the sputnik virus V6 family.

It is found in the virion. This Sputnik virophage protein is Structural protein V8.